The primary structure comprises 197 residues: Short chain dehydrogenase ausX (197 aa).

NADP(+) contacts are provided by isoleucine 49, aspartate 95, arginine 157, and tyrosine 189. Tyrosine 189 functions as the Proton acceptor in the catalytic mechanism. The active-site Proton donor is the tyrosine 189.

Belongs to the short-chain dehydrogenases/reductases (SDR) family.

It functions in the pathway secondary metabolite biosynthesis; terpenoid biosynthesis. In terms of biological role, short chain dehydrogenase; part of the gene cluster A that mediates the biosynthesis of austinol and dehydroaustinol, two fungal meroterpenoids. The first step of the pathway is the synthesis of 3,5-dimethylorsellinic acid by the polyketide synthase ausA. 3,5-dimethylorsellinic acid is then prenylated by the polyprenyl transferase ausN. Further epoxidation by the FAD-dependent monooxygenase ausM and cyclization by the probable terpene cyclase ausL lead to the formation of protoaustinoid A. Protoaustinoid A is then oxidized to spiro-lactone preaustinoid A3 by the combined action of the FAD-binding monooxygenases ausB and ausC, and the dioxygenase ausE. Acid-catalyzed keto-rearrangement and ring contraction of the tetraketide portion of preaustinoid A3 by ausJ lead to the formation of preaustinoid A4. The aldo-keto reductase ausK, with the help of ausH, is involved in the next step by transforming preaustinoid A4 into isoaustinone which is in turn hydroxylated by the P450 monooxygenase ausI to form austinolide. Finally, the cytochrome P450 monooxygenase ausG modifies austinolide to austinol. Austinol can be further modified to dehydroaustinol which forms a diffusible complex with diorcinol that initiates conidiation. Due to genetic rearrangements of the clusters and the subsequent loss of some enzymes, the end products of the Emericella nidulans austinoid biosynthesis clusters are austinol and dehydroaustinol, even if additional enzymes, such as the O-acetyltransferase ausQ and the cytochrome P450 monooxygenase ausR are still functional. This chain is Short chain dehydrogenase ausX, found in Emericella nidulans (strain FGSC A4 / ATCC 38163 / CBS 112.46 / NRRL 194 / M139) (Aspergillus nidulans).